Reading from the N-terminus, the 275-residue chain is NAD kinase (275 aa).

Aspartate 68 serves as the catalytic Proton acceptor. NAD(+) contacts are provided by residues 68-69 (DG), arginine 73, 136-137 (NE), lysine 147, arginine 164, aspartate 166, 177-182 (TAYAMS), alanine 201, and glutamine 236.

It belongs to the NAD kinase family. The cofactor is a divalent metal cation.

The protein resides in the cytoplasm. It catalyses the reaction NAD(+) + ATP = ADP + NADP(+) + H(+). Involved in the regulation of the intracellular balance of NAD and NADP, and is a key enzyme in the biosynthesis of NADP. Catalyzes specifically the phosphorylation on 2'-hydroxyl of the adenosine moiety of NAD to yield NADP. This is NAD kinase from Methanosarcina barkeri (strain Fusaro / DSM 804).